Reading from the N-terminus, the 120-residue chain is Ribosome-binding factor A (120 aa).

This sequence belongs to the RbfA family. In terms of assembly, monomer. Binds 30S ribosomal subunits, but not 50S ribosomal subunits or 70S ribosomes.

The protein resides in the cytoplasm. Its function is as follows. One of several proteins that assist in the late maturation steps of the functional core of the 30S ribosomal subunit. Associates with free 30S ribosomal subunits (but not with 30S subunits that are part of 70S ribosomes or polysomes). Required for efficient processing of 16S rRNA. May interact with the 5'-terminal helix region of 16S rRNA. In Clostridium botulinum (strain Okra / Type B1), this protein is Ribosome-binding factor A.